Consider the following 430-residue polypeptide: Histidine--tRNA ligase (430 aa).

This sequence belongs to the class-II aminoacyl-tRNA synthetase family. As to quaternary structure, homodimer.

Its subcellular location is the cytoplasm. The catalysed reaction is tRNA(His) + L-histidine + ATP = L-histidyl-tRNA(His) + AMP + diphosphate + H(+). The chain is Histidine--tRNA ligase from Parasynechococcus marenigrum (strain WH8102).